Consider the following 146-residue polypeptide: Large ribosomal subunit protein uL15 (146 aa).

Positions 1-13 (MKLHELKPAEGSR) are enriched in basic and acidic residues. The interval 1–48 (MKLHELKPAEGSRKVRNRVGRGIGSGNGKTAGKGHKGQNARSGGGVRL) is disordered. Residues 21-31 (RGIGSGNGKTA) are compositionally biased toward gly residues.

The protein belongs to the universal ribosomal protein uL15 family. Part of the 50S ribosomal subunit.

Binds to the 23S rRNA. This chain is Large ribosomal subunit protein uL15, found in Bacillus cytotoxicus (strain DSM 22905 / CIP 110041 / 391-98 / NVH 391-98).